The following is a 603-amino-acid chain: Elongation factor 4 (603 aa).

One can recognise a tr-type G domain in the interval 7 to 189 (SRIRNFSIIA…SIVHLVPPPQ (183 aa)). GTP contacts are provided by residues 19-24 (DHGKST) and 136-139 (NKID).

This sequence belongs to the TRAFAC class translation factor GTPase superfamily. Classic translation factor GTPase family. LepA subfamily.

Its subcellular location is the cell inner membrane. The catalysed reaction is GTP + H2O = GDP + phosphate + H(+). Functionally, required for accurate and efficient protein synthesis under certain stress conditions. May act as a fidelity factor of the translation reaction, by catalyzing a one-codon backward translocation of tRNAs on improperly translocated ribosomes. Back-translocation proceeds from a post-translocation (POST) complex to a pre-translocation (PRE) complex, thus giving elongation factor G a second chance to translocate the tRNAs correctly. Binds to ribosomes in a GTP-dependent manner. In Cyanothece sp. (strain PCC 7425 / ATCC 29141), this protein is Elongation factor 4.